Consider the following 242-residue polypeptide: Universal stress protein PHOS32 (242 aa).

The transit peptide at 1-43 (MNPADSDHPQLPNIKIHHPPSPRHSHHHHSSSTPSSAATPTPT) directs the protein to the chloroplast. The tract at residues 1–45 (MNPADSDHPQLPNIKIHHPPSPRHSHHHHSSSTPSSAATPTPTAG) is disordered. Over residues 15 to 30 (KIHHPPSPRHSHHHHS) the composition is skewed to basic residues. ATP is bound at residue Pro19. Position 21 is a phosphoserine; by MAPK3 and MAPK6 (Ser21). The segment covering 31–44 (SSTPSSAATPTPTA) has biased composition (low complexity). Residues Val83, 168-178 (GSRGFGAEKKR), and 186-188 (SVS) each bind ATP. Phosphoserine is present on Ser219.

Belongs to the universal stress protein A family. Post-translationally, phosphorylated by MAPK3 and MAPK6 after pathogenic elicitation (e.g. bacterial flg22, Phytophthora infestans zoospores and xylanase).

It localises to the plastid. It is found in the chloroplast. The chain is Universal stress protein PHOS32 from Arabidopsis thaliana (Mouse-ear cress).